The primary structure comprises 611 residues: Glutathione hydrolase proenzyme 2 (611 aa).

At 1-42 (MSPTDTTPLLYSWDDQSRHQDPDWHKLRNYHGAWYRRISRRR) the chain is on the cytoplasmic side. A helical; Signal-anchor for type II membrane protein transmembrane segment spans residues 43-63 (FSQFIFAFGLMTLFVLVYSIS). At 64–611 (SNLHTPTQFT…PRKYGQAAAY (548 aa)) the chain is on the lumenal side. N-linked (GlcNAc...) asparagine glycosylation occurs at asparagine 138. Arginine 147 is an L-glutamate binding site. Asparagine 153, asparagine 297, and asparagine 396 each carry an N-linked (GlcNAc...) asparagine glycan. Threonine 420 (nucleophile) is an active-site residue. L-glutamate-binding positions include threonine 438, asparagine 440, glutamine 459, aspartate 462, 490 to 491 (SS), and 512 to 513 (GG).

The protein belongs to the gamma-glutamyltransferase family. In terms of assembly, heterodimer composed of the light and heavy chains. The active site is located in the light chain. In terms of processing, cleaved by autocatalysis into a large and a small subunit.

It is found in the vacuole membrane. The enzyme catalyses an N-terminal (5-L-glutamyl)-[peptide] + an alpha-amino acid = 5-L-glutamyl amino acid + an N-terminal L-alpha-aminoacyl-[peptide]. It carries out the reaction glutathione + H2O = L-cysteinylglycine + L-glutamate. The catalysed reaction is an S-substituted glutathione + H2O = an S-substituted L-cysteinylglycine + L-glutamate. It functions in the pathway sulfur metabolism; glutathione metabolism. In terms of biological role, catalyzes the transfer of the gamma-glutamyl moiety of glutathione (GSH) and other gamma-glutamyl compounds to amino acids and peptides. Major GSH-degrading enzyme, catalyzing the hydrolytic release of L-glutamate from GSH. Plays a role in the turnover of the vacuolar GSH, serving as an alternative nitrogen source during nitrogen starvation. The protein is Glutathione hydrolase proenzyme 2 (ggt2) of Schizosaccharomyces pombe (strain 972 / ATCC 24843) (Fission yeast).